A 582-amino-acid polypeptide reads, in one-letter code: PCNA-interacting partner (582 aa).

Composition is skewed to polar residues over residues 471-487 (GVNS…SSGN) and 501-510 (KSSSLTGNTS). Positions 471–514 (GVNSSVGRPTIGTSSGNVHLGRSEKEKVARKSSSLTGNTSSKRK) are disordered.

Belongs to the PARI family. As to quaternary structure, interacts with RAD51 and PCNA. Interacts with PARP1. Interacts with TASOR.

It localises to the cytoplasm. The protein localises to the nucleus. Its function is as follows. Required to suppress inappropriate homologous recombination, thereby playing a central role DNA repair and in the maintenance of genomic stability. Antagonizes homologous recombination by interfering with the formation of the RAD51-DNA homologous recombination structure. Binds single-strand DNA and poly(A) homopolymers. Positively regulate the poly(ADP-ribosyl)ation activity of PARP1; however such function may be indirect. This Bos taurus (Bovine) protein is PCNA-interacting partner (PARPBP).